Reading from the N-terminus, the 309-residue chain is Aspartate carbamoyltransferase catalytic subunit (309 aa).

Carbamoyl phosphate is bound by residues arginine 54 and threonine 55. Residue lysine 82 participates in L-aspartate binding. Carbamoyl phosphate-binding residues include arginine 104, histidine 132, and glutamine 135. The L-aspartate site is built by arginine 165 and arginine 219. Residues glycine 260 and proline 261 each contribute to the carbamoyl phosphate site.

The protein belongs to the aspartate/ornithine carbamoyltransferase superfamily. ATCase family. In terms of assembly, heterododecamer (2C3:3R2) of six catalytic PyrB chains organized as two trimers (C3), and six regulatory PyrI chains organized as three dimers (R2).

It carries out the reaction carbamoyl phosphate + L-aspartate = N-carbamoyl-L-aspartate + phosphate + H(+). It participates in pyrimidine metabolism; UMP biosynthesis via de novo pathway; (S)-dihydroorotate from bicarbonate: step 2/3. Its function is as follows. Catalyzes the condensation of carbamoyl phosphate and aspartate to form carbamoyl aspartate and inorganic phosphate, the committed step in the de novo pyrimidine nucleotide biosynthesis pathway. The chain is Aspartate carbamoyltransferase catalytic subunit from Parafrankia sp. (strain EAN1pec).